The sequence spans 1119 residues: uncharacterized protein (1119 aa).

The first 21 residues, 1–21 (MNNIYISLYIFFISYIIQLCF), serve as a signal peptide directing secretion. Residues 170 to 206 (NKKKLDKEKKKNVIELKEYLEDLKKRMFDMQKRLNDI) are a coiled coil. Disordered stretches follow at residues 606 to 627 (NNNT…IFNN) and 782 to 905 (ASVQ…EHDE). Residues 788 to 891 (DKGEDNNDND…EKDKSRDDNK (104 aa)) show a composition bias toward basic and acidic residues. Positions 890 to 920 (NKAQNNNSTDNEEHDEITEQIGFLKNHNQKY) form a coiled coil.

This is an uncharacterized protein from Plasmodium falciparum (isolate 3D7).